A 388-amino-acid polypeptide reads, in one-letter code: Zinc finger protein ubi-d4 A (388 aa).

The tract at residues 60-190 (GPGSAPGQLY…AKGKGIGSAR (131 aa)) is disordered. Composition is skewed to basic and acidic residues over residues 97–107 (PDPEQMLKKEG) and 123–137 (DPIE…RDDD). Over residues 156 to 170 (PDDFLDDLDDEDYEE) the composition is skewed to acidic residues. A C2H2-type zinc finger spans residues 205–228 (YACDICGKRYKNRPGLSYHYAHSH). The segment at 233 to 264 (EGAGAEDKEDSQPPTPIMHRPEEQKSKKGPDG) is disordered. The span at 251–262 (HRPEEQKSKKGP) shows a compositional bias: basic and acidic residues. 2 consecutive PHD-type zinc fingers follow at residues 269–329 (NNYC…CKCC) and 326–376 (CKCC…CLDL).

It belongs to the requiem/DPF family.

Its subcellular location is the cytoplasm. The protein resides in the nucleus. Its function is as follows. May be a transcription factor required for the apoptosis response following survival factor withdrawal from myeloid cells. Might also have a role in the development and maturation of lymphoid cells. This chain is Zinc finger protein ubi-d4 A (req-a), found in Xenopus laevis (African clawed frog).